A 506-amino-acid chain; its full sequence is UPF0371 protein FN1121 (506 aa).

This sequence belongs to the UPF0371 family.

The protein is UPF0371 protein FN1121 of Fusobacterium nucleatum subsp. nucleatum (strain ATCC 25586 / DSM 15643 / BCRC 10681 / CIP 101130 / JCM 8532 / KCTC 2640 / LMG 13131 / VPI 4355).